The chain runs to 362 residues: Chorismate synthase (362 aa).

R47 is an NADP(+) binding site. FMN contacts are provided by residues 124–126 (RSS), G286, 301–305 (KPTAT), and R327.

This sequence belongs to the chorismate synthase family. As to quaternary structure, homotetramer. FMNH2 serves as cofactor.

It catalyses the reaction 5-O-(1-carboxyvinyl)-3-phosphoshikimate = chorismate + phosphate. It participates in metabolic intermediate biosynthesis; chorismate biosynthesis; chorismate from D-erythrose 4-phosphate and phosphoenolpyruvate: step 7/7. In terms of biological role, catalyzes the anti-1,4-elimination of the C-3 phosphate and the C-6 proR hydrogen from 5-enolpyruvylshikimate-3-phosphate (EPSP) to yield chorismate, which is the branch point compound that serves as the starting substrate for the three terminal pathways of aromatic amino acid biosynthesis. This reaction introduces a second double bond into the aromatic ring system. This Gloeothece citriformis (strain PCC 7424) (Cyanothece sp. (strain PCC 7424)) protein is Chorismate synthase.